Consider the following 345-residue polypeptide: Arginine N-succinyltransferase (345 aa).

Residue Leu-125 coordinates succinyl-CoA. Catalysis depends on His-229, which acts as the Proton donor.

It belongs to the arginine N-succinyltransferase family.

It carries out the reaction succinyl-CoA + L-arginine = N(2)-succinyl-L-arginine + CoA + H(+). It functions in the pathway amino-acid degradation; L-arginine degradation via AST pathway; L-glutamate and succinate from L-arginine: step 1/5. In terms of biological role, catalyzes the transfer of succinyl-CoA to arginine to produce N(2)-succinylarginine. The protein is Arginine N-succinyltransferase of Yersinia enterocolitica serotype O:8 / biotype 1B (strain NCTC 13174 / 8081).